A 168-amino-acid polypeptide reads, in one-letter code: Photosystem I assembly protein Ycf3 (168 aa).

TPR repeat units follow at residues 35-68, 72-105, and 120-153; these read AFTY…EIDP, SYIL…NPFL, and GEQA…TPGN.

It belongs to the Ycf3 family.

It is found in the plastid. It localises to the chloroplast thylakoid membrane. Essential for the assembly of the photosystem I (PSI) complex. May act as a chaperone-like factor to guide the assembly of the PSI subunits. The protein is Photosystem I assembly protein Ycf3 of Nandina domestica (Heavenly bamboo).